The primary structure comprises 178 residues: 6,7-dimethyl-8-ribityllumazine synthase (178 aa).

5-amino-6-(D-ribitylamino)uracil is bound by residues Phe23, 61–63, and 85–87; these read SFE and AVI. 90-91 serves as a coordination point for (2S)-2-hydroxy-3-oxobutyl phosphate; that stretch reads QT. Catalysis depends on His93, which acts as the Proton donor. Tyr118 lines the 5-amino-6-(D-ribitylamino)uracil pocket. Residue Arg132 participates in (2S)-2-hydroxy-3-oxobutyl phosphate binding.

It belongs to the DMRL synthase family.

It carries out the reaction (2S)-2-hydroxy-3-oxobutyl phosphate + 5-amino-6-(D-ribitylamino)uracil = 6,7-dimethyl-8-(1-D-ribityl)lumazine + phosphate + 2 H2O + H(+). Its pathway is cofactor biosynthesis; riboflavin biosynthesis; riboflavin from 2-hydroxy-3-oxobutyl phosphate and 5-amino-6-(D-ribitylamino)uracil: step 1/2. Catalyzes the formation of 6,7-dimethyl-8-ribityllumazine by condensation of 5-amino-6-(D-ribitylamino)uracil with 3,4-dihydroxy-2-butanone 4-phosphate. This is the penultimate step in the biosynthesis of riboflavin. This chain is 6,7-dimethyl-8-ribityllumazine synthase, found in Thermosynechococcus vestitus (strain NIES-2133 / IAM M-273 / BP-1).